Here is a 413-residue protein sequence, read N- to C-terminus: Serine hydroxymethyltransferase (413 aa).

(6S)-5,6,7,8-tetrahydrofolate contacts are provided by residues Leu-117 and 121–123 (GHL). Lys-226 carries the post-translational modification N6-(pyridoxal phosphate)lysine. 349 to 351 (SPF) contacts (6S)-5,6,7,8-tetrahydrofolate.

The protein belongs to the SHMT family. In terms of assembly, homodimer. Pyridoxal 5'-phosphate serves as cofactor.

It is found in the cytoplasm. The enzyme catalyses (6R)-5,10-methylene-5,6,7,8-tetrahydrofolate + glycine + H2O = (6S)-5,6,7,8-tetrahydrofolate + L-serine. The protein operates within one-carbon metabolism; tetrahydrofolate interconversion. It functions in the pathway amino-acid biosynthesis; glycine biosynthesis; glycine from L-serine: step 1/1. Catalyzes the reversible interconversion of serine and glycine with tetrahydrofolate (THF) serving as the one-carbon carrier. This reaction serves as the major source of one-carbon groups required for the biosynthesis of purines, thymidylate, methionine, and other important biomolecules. Also exhibits THF-independent aldolase activity toward beta-hydroxyamino acids, producing glycine and aldehydes, via a retro-aldol mechanism. In Listeria monocytogenes serovar 1/2a (strain ATCC BAA-679 / EGD-e), this protein is Serine hydroxymethyltransferase.